The primary structure comprises 217 residues: Vesicle transport through interaction with t-SNAREs homolog 1A (217 aa).

Residues M1–R192 are Cytoplasmic-facing. Coiled coils occupy residues P31 to R92 and E112 to S178. Residues I193 to F213 traverse the membrane as a helical; Anchor for type IV membrane protein segment. Topologically, residues V214–H217 are vesicular.

The protein belongs to the VTI1 family. In terms of assembly, interacts with distinct SNARE complexes that contain either STX5 or STX6. Interacts with NAPA and, to a lesser extent, with NAPG. Identified in a complex containing STX6, STX12, VAMP4 and VTI1A. As to expression, widely expressed.

It is found in the golgi apparatus membrane. V-SNARE that mediates vesicle transport pathways through interactions with t-SNAREs on the target membrane. These interactions are proposed to mediate aspects of the specificity of vesicle trafficking and to promote fusion of the lipid bilayers. Involved in vesicular transport from the late endosomes to the trans-Golgi network. Along with VAMP7, involved in an non-conventional RAB1-dependent traffic route to the cell surface used by KCNIP1 and KCND2. May be concerned with increased secretion of cytokines associated with cellular senescence. This Mus musculus (Mouse) protein is Vesicle transport through interaction with t-SNAREs homolog 1A (Vti1a).